A 253-amino-acid chain; its full sequence is MMMKIPWGSIPVLMLLLLLGLIDISQAQLSCTGPPAIPGIPGIPGTPGPDGQPGTPGIKGEKGLPGLAGDHGEFGEKGDPGIPGNPGKVGPKGPMGPKGGPGAPGAPGPKGESGDYKATQKIAFSATRTINVPLRRDQTIRFDHVITNMNNNYEPRSGKFTCKVPGLYYFTYHASSRGNLCVNLMRGRERAQKVVTFCDYAYNTFQVTTGGMVLKLEQGENVFLQATDKNSLLGMEGANSIFSGFLLFPDMEA.

Positions 1-27 are cleaved as a signal peptide; that stretch reads MMMKIPWGSIPVLMLLLLLGLIDISQA. Gln-28 carries the post-translational modification Pyrrolidone carboxylic acid. Pro-35, Pro-38, Pro-41, Pro-53, and Pro-56 each carry 4-hydroxyproline. Collagen-like domains follow at residues 37–86 and 60–114; these read IPGI…PGNP and GEKG…GESG. Positions 38-115 are disordered; the sequence is PGIPGIPGTP…APGPKGESGD (78 aa). Residues Lys-59 and Lys-62 each carry the 5-hydroxylysine modification. Pro-65 is subject to 4-hydroxyproline. A compositionally biased stretch (basic and acidic residues) spans 70–79; that stretch reads DHGEFGEKGD. The residue at position 77 (Lys-77) is a 5-hydroxylysine. The segment covering 80–92 has biased composition (low complexity); sequence PGIPGNPGKVGPK. 2 positions are modified to 4-hydroxyproline: Pro-83 and Pro-86. Residues Lys-92 and Lys-98 each carry the 5-hydroxylysine modification. The span at 96-105 shows a compositional bias: gly residues; sequence GPKGGPGAPG. 4-hydroxyproline is present on residues Pro-101, Pro-104, and Pro-107. Position 110 is a 5-hydroxylysine (Lys-110). Residues 117–253 enclose the C1q domain; it reads KATQKIAFSA…GFLLFPDMEA (137 aa). An intrachain disulfide couples Cys-181 to Cys-198. Asp-199, Tyr-200, and Gln-206 together coordinate Ca(2+).

Core component of the complement C1 complex, a calcium-dependent complex composed of 1 molecule of the C1Q subcomplex, 2 molecules of C1R and 2 molecules of C1S. The C1Q subcomplex is composed 18 subunits: 3 chains of C1QA, C1QB, and C1QC trimerize to form 6 collagen-like triple helices connected to six globular ligand-recognition modules (C1q domain). Post-translationally, hydroxylated on lysine and proline residues. Hydroxylated lysine residues can be glycosylated. Human C1Q contains up to 68.3 hydroxylysine-galactosylglucose residues and up to 2.5 hydroxylysine-galactose per molecule. Total percentage hydroxylysine residues glycosylated is 86.4%.

It localises to the secreted. Its subcellular location is the cell surface. With respect to regulation, the C1Q subcomplex is inhibited by sulfated molecules, such as triterpenoid sulfates, heparan sulfate, or chondroitin sulfates. Functionally, core component of the complement C1 complex, a multiprotein complex that initiates the classical pathway of the complement system, a cascade of proteins that leads to phagocytosis and breakdown of pathogens and signaling that strengthens the adaptive immune system. The classical complement pathway is initiated by the C1Q subcomplex of the C1 complex, which specifically binds IgG or IgM immunoglobulins complexed with antigens, forming antigen-antibody complexes on the surface of pathogens: C1QA, together with C1QB and C1QC, specifically recognizes and binds the Fc regions of IgG or IgM via its C1q domain. Immunoglobulin-binding activates the proenzyme C1R, which cleaves C1S, initiating the proteolytic cascade of the complement system. The C1Q subcomplex is activated by a hexamer of IgG complexed with antigens, while it is activated by a pentameric IgM. The C1Q subcomplex also recognizes and binds phosphatidylserine exposed on the surface of cells undergoing programmed cell death, possibly promoting activation of the complement system. The polypeptide is Complement C1q subcomponent subunit B (Homo sapiens (Human)).